The chain runs to 177 residues: Ribosome maturation factor RimM (177 aa).

Positions 96–177 constitute a PRC barrel domain; that stretch reads DNEFYWVDLI…KITVDWGLDY (82 aa).

The protein belongs to the RimM family. Binds ribosomal protein uS19.

Its subcellular location is the cytoplasm. In terms of biological role, an accessory protein needed during the final step in the assembly of 30S ribosomal subunit, possibly for assembly of the head region. Essential for efficient processing of 16S rRNA. May be needed both before and after RbfA during the maturation of 16S rRNA. It has affinity for free ribosomal 30S subunits but not for 70S ribosomes. In Herminiimonas arsenicoxydans, this protein is Ribosome maturation factor RimM.